Reading from the N-terminus, the 238-residue chain is Small heat shock protein, chloroplastic (238 aa).

The tract at residues 31–87 (APLSTGGRTRPLSVASAAQENRDNSVDVQVSQAQNAGNQQGNAVQRRPRRAGFDISP) is disordered. The segment covering 58–75 (VQVSQAQNAGNQQGNAVQ) has biased composition (low complexity). A sHSP domain is found at 124 to 238 (AARARRRMPW…ERKVIDVQVQ (115 aa)).

This sequence belongs to the small heat shock protein (HSP20) family.

It is found in the plastid. The protein localises to the chloroplast. The polypeptide is Small heat shock protein, chloroplastic (HSP21) (Triticum aestivum (Wheat)).